The following is a 207-amino-acid chain: ATP-dependent Clp protease proteolytic subunit (207 aa).

Residue Ser-111 is the Nucleophile of the active site. His-136 is a catalytic residue.

It belongs to the peptidase S14 family. Fourteen ClpP subunits assemble into 2 heptameric rings which stack back to back to give a disk-like structure with a central cavity, resembling the structure of eukaryotic proteasomes.

The protein resides in the cytoplasm. It catalyses the reaction Hydrolysis of proteins to small peptides in the presence of ATP and magnesium. alpha-casein is the usual test substrate. In the absence of ATP, only oligopeptides shorter than five residues are hydrolyzed (such as succinyl-Leu-Tyr-|-NHMec, and Leu-Tyr-Leu-|-Tyr-Trp, in which cleavage of the -Tyr-|-Leu- and -Tyr-|-Trp bonds also occurs).. Cleaves peptides in various proteins in a process that requires ATP hydrolysis. Has a chymotrypsin-like activity. Plays a major role in the degradation of misfolded proteins. The sequence is that of ATP-dependent Clp protease proteolytic subunit from Yersinia pseudotuberculosis serotype O:1b (strain IP 31758).